The primary structure comprises 729 residues: Fatty acid oxidation complex subunit alpha (729 aa).

The tract at residues 1–189 (MLYKGDTLYL…KIGLVDGVVA (189 aa)) is enoyl-CoA hydratase/isomerase. Asp-296 contributes to the substrate binding site. Positions 311–729 (ETPKHAAVLG…ARPVGALKTA (419 aa)) are 3-hydroxyacyl-CoA dehydrogenase. Residues Met-324, Asp-343, 400–402 (VVE), Lys-407, and Ser-429 contribute to the NAD(+) site. Catalysis depends on His-450, which acts as the For 3-hydroxyacyl-CoA dehydrogenase activity. Asn-453 lines the NAD(+) pocket. Asn-500 and Tyr-660 together coordinate substrate.

It in the N-terminal section; belongs to the enoyl-CoA hydratase/isomerase family. This sequence in the C-terminal section; belongs to the 3-hydroxyacyl-CoA dehydrogenase family. In terms of assembly, heterotetramer of two alpha chains (FadB) and two beta chains (FadA).

The catalysed reaction is a (3S)-3-hydroxyacyl-CoA + NAD(+) = a 3-oxoacyl-CoA + NADH + H(+). It catalyses the reaction a (3S)-3-hydroxyacyl-CoA = a (2E)-enoyl-CoA + H2O. It carries out the reaction a 4-saturated-(3S)-3-hydroxyacyl-CoA = a (3E)-enoyl-CoA + H2O. The enzyme catalyses (3S)-3-hydroxybutanoyl-CoA = (3R)-3-hydroxybutanoyl-CoA. The catalysed reaction is a (3Z)-enoyl-CoA = a 4-saturated (2E)-enoyl-CoA. It catalyses the reaction a (3E)-enoyl-CoA = a 4-saturated (2E)-enoyl-CoA. The protein operates within lipid metabolism; fatty acid beta-oxidation. Involved in the aerobic and anaerobic degradation of long-chain fatty acids via beta-oxidation cycle. Catalyzes the formation of 3-oxoacyl-CoA from enoyl-CoA via L-3-hydroxyacyl-CoA. It can also use D-3-hydroxyacyl-CoA and cis-3-enoyl-CoA as substrate. The chain is Fatty acid oxidation complex subunit alpha from Klebsiella pneumoniae subsp. pneumoniae (strain ATCC 700721 / MGH 78578).